Consider the following 673-residue polypeptide: MAQACWGCYPWLVLICACAWGHPKSLNQREDVRNCSTSPPYLPVTAVNTTAQLTALREQMLTQNLSAYIIPDTDAHMSEYIGECDQRRAWITGFIGSAGIAVVTERKAALWTDSRYWTQAERQMDCNWELHKEVSTGHIVTWLLTEIPVGGRVGFDPFLFSIDSWESYDVALQDADRELVSITVNLVDLVWGSERPPLPNAPIYALQEAFAGSTWQEKVSNIRSQMQKHHERPTAVLLSALDETAWLFNLRSSDIPYNPFFYSYTLLTDSSIRLFANKSRFSSETLQYLNSSCNSSMCVQLEDYSQIRDSIQAYTSGDVKIWIGTRYTSYGLYEVIPKEKLVEDDYSPVMITKAVKNSREQALLKASHVRDAVAVIRYLAWLEKNVPTGTVDEFSGAKRVEEFRGEEEFFSGPSFETISASGLNAALAHYSPTKELHRKLSSDEMYLLDSGGQYWDGTTDITRTVHWGTPSAFQKEAYTRVLIGNIDLSRLVFPAATSGRVVEAFARKALWDVGLNYGHGTGHGIGNFLCVHEWPVGFQYGNIPMAEGMFTSIEPGYYQDGEFGIRLEDVALVVEAKTKYPGTYLTFEVVSLVPYDRKLIDVSLLSPEQLQYLNRYYQAIREKVGPELQRRGLLEELSWLQRHTEPLSARAAPTTSLGSLMTVSALAILGWSV.

The N-terminal stretch at 1–21 (MAQACWGCYPWLVLICACAWG) is a signal peptide. Asn-34, Asn-48, and Asn-64 each carry an N-linked (GlcNAc...) asparagine glycan. Residue Arg-115 participates in substrate binding. Residues Asn-277, Asn-290, and Asn-294 are each glycosylated (N-linked (GlcNAc...) asparagine). Substrate is bound at residue His-429. Asp-449 contributes to the Mn(2+) binding site. Asp-449, Asp-460, and His-523 together coordinate Zn(2+). Positions 523, 532, and 554 each coordinate substrate. Positions 554 and 568 each coordinate Zn(2+). Ala-649 carries the GPI-anchor amidated alanine lipid modification. A propeptide spans 650 to 673 (RAAPTTSLGSLMTVSALAILGWSV) (removed in mature form).

Belongs to the peptidase M24B family. As to quaternary structure, homotrimer. Requires Zn(2+) as cofactor. Post-translationally, N-glycosylated. In terms of tissue distribution, kidney.

The protein resides in the cell membrane. The catalysed reaction is Release of any N-terminal amino acid, including proline, that is linked to proline, even from a dipeptide or tripeptide.. Inhibited by apstatin and the metal ion chelator EDTA. Potently inhibited by the converting enzyme inhibitors cilazaprilat; enalaprilat; L155,212; ramiprilat and YS 980. Also inhibited to a lesser extent by indolaprilat; quinaprilat; spiraprilat; captopril and zofenoprilat. In terms of biological role, membrane-bound metalloprotease which catalyzes the removal of a penultimate prolyl residue from the N-termini of peptides, such as Arg-Pro-Pro. May play a role in the metabolism of the vasodilator bradykinin. This chain is Xaa-Pro aminopeptidase 2 (XPNPEP2), found in Sus scrofa (Pig).